A 583-amino-acid chain; its full sequence is MSSDALKALLQWGASFGVIVPEELKFLYTDLKGIICVCEKDIDNPSIKIPPEIVISRNLPMKFFGLSESTKNINGWLKLFFAKIKFDRDNDTIVDNVRVNDKFKPYLDALPSRLNSPLVWNPSELKRLSSTNIGNSIHEKFEGIFKEWFELVSSSDMFDLERVADDVQTFHNLDELTYEALYEKILKITELQRPTIWYSFPAFLWSHLIFISRAFPEYVLNRNCPDNSIVLLPIVDLLNHDYRSKVKWYPENGWFCYEKIGTASQSRELSNNYGGKGNEELLSGYGFVLEDNIFDSVALKVKLPLDVVSTILETEPSLKLPLLSDYTTYAFENKDCVQQEKKATRSATDYINGVTYFINIQNEQCLEPLLDLFTYLSKAEEEDLHDLRARLQGIQMLRNALQSKLNSITGPPATDDSYAIDPYRVYCADVYTKGQKQILKEALTRLKKLEKTMLSENKHQLLTMSKILKNDPAFAETELPSLFSNEDGEEVIFESTYDLLILWILLKTKKNSYPTKYEWVGQQYTNFKQTAYISDDAKAFHTAYFEKQDDVDLAEVDHAIQFVVDNSFTRTSSTTEETILVRK.

Positions 22 to 274 (EELKFLYTDL…QSRELSNNYG (253 aa)) constitute an SET domain. An S-adenosyl-L-methionine-binding site is contributed by Tyr-273. Coiled coils occupy residues 378–407 (KAEEEDLHDLRARLQGIQMLRNALQSKLNS) and 433–459 (KGQKQILKEALTRLKKLEKTMLSENKH).

It belongs to the class V-like SAM-binding methyltransferase superfamily. RKM1 family.

It is found in the cytoplasm. The protein localises to the nucleus. S-adenosyl-L-methionine-dependent protein-lysine N-methyltransferase that monomethylates ribosomal protein S18 (RPS18A and RPS18B) at 'Lys-48' and dimethylates ribosomal protein L23 (RPL23A and RPL23B) at 'Lys-106' and 'Lys-110'. The protein is Ribosomal lysine N-methyltransferase 1 of Saccharomyces cerevisiae (strain ATCC 204508 / S288c) (Baker's yeast).